A 246-amino-acid polypeptide reads, in one-letter code: MNSATDSARPHDQIRPVEIECGYLESNPASVLYKSGKTIVLCTASVETNVPPWMEGRGKGWVTAEYNMLPGSTSPRKRRDRSGKVDGRTTEIQRLIGRSLRAIVDLHALGERSITVDCDVLQADGGTRTASITGGYIALSLAVSQLAAIPELDPPVDPTAVLRDSVAAISVGVIGEDVVLDLDYRLDSAADVDMNVIMTGSGRFIELQGTGEEATFDDVQLAELLRLGKIGIAELTKLQKAQLVTV.

A disordered region spans residues 67-87 (NMLPGSTSPRKRRDRSGKVDG). Residues Arg88 and 126–128 (GTR) contribute to the phosphate site.

This sequence belongs to the RNase PH family. In terms of assembly, homohexameric ring arranged as a trimer of dimers.

It carries out the reaction tRNA(n+1) + phosphate = tRNA(n) + a ribonucleoside 5'-diphosphate. Phosphorolytic 3'-5' exoribonuclease that plays an important role in tRNA 3'-end maturation. Removes nucleotide residues following the 3'-CCA terminus of tRNAs; can also add nucleotides to the ends of RNA molecules by using nucleoside diphosphates as substrates, but this may not be physiologically important. Probably plays a role in initiation of 16S rRNA degradation (leading to ribosome degradation) during starvation. The sequence is that of Ribonuclease PH from Rhodopirellula baltica (strain DSM 10527 / NCIMB 13988 / SH1).